We begin with the raw amino-acid sequence, 671 residues long: Archaeal Rqc2 homolog aRqcH (671 aa).

2 coiled-coil regions span residues 291–363 (KVVV…ARIK) and 410–465 (RKNA…MQMK).

Belongs to the NEMF family. As to quaternary structure, associates with stalled 50S ribosomal subunits.

In terms of biological role, probably part of the ribosome quality control system (RQC). May mediate the addition of alanine residues (Ala tailing) to incompletely synthesized nascent chains from stalled ribosomes, leading to their degradation. This is Archaeal Rqc2 homolog aRqcH from Methanocaldococcus jannaschii (strain ATCC 43067 / DSM 2661 / JAL-1 / JCM 10045 / NBRC 100440) (Methanococcus jannaschii).